A 345-amino-acid chain; its full sequence is tRNA dimethylallyltransferase (345 aa).

9–16 (GPTASGKS) serves as a coordination point for ATP. 11 to 16 (TASGKS) provides a ligand contact to substrate. Interaction with substrate tRNA regions lie at residues 34-37 (DSMQ) and 195-199 (QRMIR).

This sequence belongs to the IPP transferase family. As to quaternary structure, monomer. The cofactor is Mg(2+).

It carries out the reaction adenosine(37) in tRNA + dimethylallyl diphosphate = N(6)-dimethylallyladenosine(37) in tRNA + diphosphate. Its function is as follows. Catalyzes the transfer of a dimethylallyl group onto the adenine at position 37 in tRNAs that read codons beginning with uridine, leading to the formation of N6-(dimethylallyl)adenosine (i(6)A). The sequence is that of tRNA dimethylallyltransferase from Orientia tsutsugamushi (strain Ikeda) (Rickettsia tsutsugamushi).